Consider the following 667-residue polypeptide: tRNA 5-methylaminomethyl-2-thiouridine biosynthesis bifunctional protein MnmC (667 aa).

Residues 1-12 are compositionally biased toward polar residues; sequence MSKQQAPNTTGI. The disordered stretch occupies residues 1 to 20; the sequence is MSKQQAPNTTGIGTADLQWH. Positions 1 to 240 are tRNA (mnm(5)s(2)U34)-methyltransferase; it reads MSKQQAPNTT…KRECLRGVLE (240 aa). The FAD-dependent cmnm(5)s(2)U34 oxidoreductase stretch occupies residues 268–667; it reads IGAGIAGAAC…LVRSLKKPPL (400 aa).

The protein in the N-terminal section; belongs to the methyltransferase superfamily. tRNA (mnm(5)s(2)U34)-methyltransferase family. In the C-terminal section; belongs to the DAO family. The cofactor is FAD.

The protein resides in the cytoplasm. It catalyses the reaction 5-aminomethyl-2-thiouridine(34) in tRNA + S-adenosyl-L-methionine = 5-methylaminomethyl-2-thiouridine(34) in tRNA + S-adenosyl-L-homocysteine + H(+). In terms of biological role, catalyzes the last two steps in the biosynthesis of 5-methylaminomethyl-2-thiouridine (mnm(5)s(2)U) at the wobble position (U34) in tRNA. Catalyzes the FAD-dependent demodification of cmnm(5)s(2)U34 to nm(5)s(2)U34, followed by the transfer of a methyl group from S-adenosyl-L-methionine to nm(5)s(2)U34, to form mnm(5)s(2)U34. The protein is tRNA 5-methylaminomethyl-2-thiouridine biosynthesis bifunctional protein MnmC of Magnetococcus marinus (strain ATCC BAA-1437 / JCM 17883 / MC-1).